Here is a 157-residue protein sequence, read N- to C-terminus: Protein Smg homolog (157 aa).

The protein belongs to the Smg family.

The polypeptide is Protein Smg homolog (Aliivibrio fischeri (strain MJ11) (Vibrio fischeri)).